A 439-amino-acid chain; its full sequence is tRNA-2-methylthio-N(6)-dimethylallyladenosine synthase (439 aa).

The MTTase N-terminal domain maps to 5 to 121; it reads KKLFIKTYGC…LPELEAKTRA (117 aa). [4Fe-4S] cluster is bound by residues Cys-14, Cys-50, Cys-84, Cys-159, Cys-163, and Cys-166. In terms of domain architecture, Radical SAM core spans 145–378; the sequence is AKRGPTAFLT…ITRHQREIQD (234 aa). The TRAM domain maps to 378-439; that stretch reads DGMVGREVSV…GANSLAGELA (62 aa).

The protein belongs to the methylthiotransferase family. MiaB subfamily. Monomer. [4Fe-4S] cluster is required as a cofactor.

Its subcellular location is the cytoplasm. It carries out the reaction N(6)-dimethylallyladenosine(37) in tRNA + (sulfur carrier)-SH + AH2 + 2 S-adenosyl-L-methionine = 2-methylsulfanyl-N(6)-dimethylallyladenosine(37) in tRNA + (sulfur carrier)-H + 5'-deoxyadenosine + L-methionine + A + S-adenosyl-L-homocysteine + 2 H(+). In terms of biological role, catalyzes the methylthiolation of N6-(dimethylallyl)adenosine (i(6)A), leading to the formation of 2-methylthio-N6-(dimethylallyl)adenosine (ms(2)i(6)A) at position 37 in tRNAs that read codons beginning with uridine. This chain is tRNA-2-methylthio-N(6)-dimethylallyladenosine synthase, found in Ruegeria pomeroyi (strain ATCC 700808 / DSM 15171 / DSS-3) (Silicibacter pomeroyi).